Here is a 161-residue protein sequence, read N- to C-terminus: MRVSWLESKCDTPFANNLSFISSGSSSSSSFTLASTACRNSCLCSSSIFFQVLRRNCSSNCCSISNVDISLSAFSFNRFETSSKMARYNLPCPRSLLAILSPPKCCNSPAISCQLRRCCSGCPSIDLNSSLRISTLERRVLPFSLWVSNRAKFANCSSLQC.

This is an uncharacterized protein from Escherichia coli (strain K12).